The chain runs to 189 residues: Elongation factor P (189 aa).

This sequence belongs to the elongation factor P family.

The protein resides in the cytoplasm. It participates in protein biosynthesis; polypeptide chain elongation. Involved in peptide bond synthesis. Stimulates efficient translation and peptide-bond synthesis on native or reconstituted 70S ribosomes in vitro. Probably functions indirectly by altering the affinity of the ribosome for aminoacyl-tRNA, thus increasing their reactivity as acceptors for peptidyl transferase. The polypeptide is Elongation factor P (Rhizobium radiobacter (Agrobacterium tumefaciens)).